Consider the following 1482-residue polypeptide: Cystic fibrosis transmembrane conductance regulator (1482 aa).

Over 1–77 (MQRSPLEKAS…KLINALRRCF (77 aa)) the chain is Cytoplasmic. A helical membrane pass occupies residues 78–98 (FWRFMFYGIILYLGEVTKAVQ). An ABC transmembrane type-1 1 domain is found at 81 to 365 (FMFYGIILYL…WAVQTWYDSL (285 aa)). At 99-122 (PLLLGRIIASYDPDNKAERSIAIY) the chain is on the extracellular side. A helical transmembrane segment spans residues 123 to 146 (LGVGLCLLFIVRTLLLHPAIFGPH). The Cytoplasmic portion of the chain corresponds to 147 to 195 (HIGMQMRIAMFSLIYKKTLKLSSRVLDKISIGQLVSLLSNNLNKFDEGL). The chain crosses the membrane as a helical span at residues 196 to 216 (ALAHFVWIAPLQVTLLMGLLW). Topologically, residues 217–222 (ELLQAS) are extracellular. Residues 223–243 (AFCGLAFLVVLALFQAGLGKM) form a helical membrane-spanning segment. Topologically, residues 244-298 (MMKYRDQRAGKINERLVITSEMIENIQSVKAYCWEEAMEKMIENLRQTELKLTRK) are cytoplasmic. Residues 299–319 (AAYVRYFNSSAFFFSGLFVVF) form a helical membrane-spanning segment. Residues 320 to 339 (LSVLPYALLKGIMLRKIFTT) lie on the Extracellular side of the membrane. Residues 340–358 (ISFCIVLRMAVTRQFPWAV) form a helical membrane-spanning segment. Topologically, residues 359 to 859 (QTWYDSLGAI…YLRYVTVHKS (501 aa)) are cytoplasmic. ATP contacts are provided by residues tryptophan 401, serine 434, 458-465 (GSTGAGKT), and glutamine 493. The 224-residue stretch at 423-646 (NGDNSLFFSN…RPDFSSKLMG (224 aa)) folds into the ABC transporter 1 domain. Cysteine 524 carries the S-palmitoyl cysteine lipid modification. Phosphoserine occurs at positions 549 and 660. Positions 654–832 (TAERRNSIIT…EEINEEDLRE (179 aa)) are disordered R region. A Phosphoserine; by PKA modification is found at serine 670. Serine 686 is modified (phosphoserine). Residue lysine 688 forms a Glycyl lysine isopeptide (Lys-Gly) (interchain with G-Cter in ubiquitin) linkage. 2 positions are modified to phosphoserine: serine 700 and serine 712. The residue at position 717 (threonine 717) is a Phosphothreonine. Phosphoserine is present on residues serine 737, serine 768, serine 791, serine 796, and serine 814. The chain crosses the membrane as a helical span at residues 860–880 (LIFVLIWCLVVFLAEVAACLV). Residues 860 to 1156 (LIFVLIWCLV…AVNSSIDVDS (297 aa)) form the ABC transmembrane type-1 2 domain. Residues 881–919 (VLCLLKKTSPQDKGNSTKGANNSYAVIITSTSAYYVFYI) are Extracellular-facing. Asparagine 895 and asparagine 901 each carry an N-linked (GlcNAc...) asparagine glycan. Residues 920–940 (YVGVADGLLALGLFRGLPLVH) form a discontinuously helical membrane-spanning segment. The Cytoplasmic portion of the chain corresponds to 941 to 991 (TLITVSKILHRKMLHSVLQAPMSTLNTLKAGGILNRFSKDIAVLDDLLPLT). Residues 992–1012 (IFDFIQLLLIVIGAVAVVSVL) form a helical membrane-spanning segment. Residues 1013 to 1014 (KP) are Extracellular-facing. Residues 1015-1035 (YIFLATVPVIVAFILLRAYFL) traverse the membrane as a helical segment. The Cytoplasmic segment spans residues 1036 to 1096 (HTSQQLKQLE…TANWFLYLST (61 aa)). The helical transmembrane segment at 1097–1117 (LRWFQMRIEMIFVIFFIAVTF) threads the bilayer. The Extracellular portion of the chain corresponds to 1118 to 1131 (ISILTTGEGEGTVG). Residues 1132–1152 (IILTLAMNIMSTLQWAVNSSI) form a helical membrane-spanning segment. Topologically, residues 1153–1482 (DVDSLMRSVS…TEEEVQETRL (330 aa)) are cytoplasmic. The 234-residue stretch at 1212–1445 (MTVKDLTAKY…KSLFRQAISP (234 aa)) folds into the ABC transporter 2 domain. ATP is bound by residues tyrosine 1221 and 1246–1253 (GRTGSGKS). The tract at residues 1388–1482 (RTLKQAFADC…TEEEVQETRL (95 aa)) is interaction with GORASP2. Cysteine 1397 carries S-palmitoyl cysteine lipidation. Positions 1454–1464 (HRNSSKQRSRS) are enriched in basic residues. The interval 1454–1482 (HRNSSKQRSRSKIAALKEETEEEVQETRL) is disordered. Phosphoserine is present on serine 1458. Residues 1472–1482 (ETEEEVQETRL) show a composition bias toward acidic residues. The PDZ-binding signature appears at 1480–1482 (TRL).

Belongs to the ABC transporter superfamily. ABCC family. CFTR transporter (TC 3.A.1.202) subfamily. In terms of assembly, monomer; does not require oligomerization for channel activity. May form oligomers in the membrane. Interacts with SLC26A3, SLC26A6 and NHERF1. Interacts with SHANK2. Interacts with MYO6. Interacts (via C-terminus) with GOPC (via PDZ domain); this promotes CFTR internalization and thereby decreases channel activity. Interacts with SLC4A7 through NHERF1. Found in a complex with MYO5B and RAB11A. Interacts with ANO1. Interacts with SLC26A8. Interacts with AHCYL1; the interaction increases CFTR activity. Interacts with CSE1L. The core-glycosylated form interacts with GORASP2 (via PDZ GRASP-type 1 domain) in respone to ER stress. Interacts with MARCHF2; the interaction leads to CFTR ubiqtuitination and degradation. Interacts with ADGRG2. Post-translationally, N-glycosylated. Phosphorylated; cAMP treatment promotes phosphorylation and activates the channel. Dephosphorylation decreases the ATPase activity (in vitro). Phosphorylation at PKA sites activates the channel. Phosphorylation at PKC sites enhances the response to phosphorylation by PKA. Phosphorylated by AMPK; this inhibits channel activity. In terms of processing, ubiquitinated, leading to its degradation in the lysosome. Deubiquitination by USP10 in early endosomes enhances its endocytic recycling to the cell membrane. Ubiquitinated by RNF185 during ER stress. Ubiquitinated by MARCHF2.

The protein localises to the apical cell membrane. It localises to the early endosome membrane. The protein resides in the cell membrane. Its subcellular location is the recycling endosome membrane. It is found in the endoplasmic reticulum membrane. The protein localises to the nucleus. The enzyme catalyses ATP + H2O + closed Cl(-) channel = ADP + phosphate + open Cl(-) channel.. It carries out the reaction chloride(in) = chloride(out). The catalysed reaction is hydrogencarbonate(in) = hydrogencarbonate(out). It catalyses the reaction ATP + H2O = ADP + phosphate + H(+). Its function is as follows. Epithelial ion channel that plays an important role in the regulation of epithelial ion and water transport and fluid homeostasis. Mediates the transport of chloride ions across the cell membrane. Possesses an intrinsic ATPase activity and utilizes ATP to gate its channel; the passive flow of anions through the channel is gated by cycles of ATP binding and hydrolysis by the ATP-binding domains. The ion channel is also permeable to HCO(3)(-); selectivity depends on the extracellular chloride concentration. Exerts its function also by modulating the activity of other ion channels and transporters. Contributes to the regulation of the pH and the ion content of the epithelial fluid layer. Modulates the activity of the epithelial sodium channel (ENaC) complex, in part by regulating the cell surface expression of the ENaC complex. May regulate bicarbonate secretion and salvage in epithelial cells by regulating the transporter SLC4A7. Can inhibit the chloride channel activity of ANO1. Plays a role in the chloride and bicarbonate homeostasis during sperm epididymal maturation and capacitation. The polypeptide is Cystic fibrosis transmembrane conductance regulator (Sus scrofa (Pig)).